A 286-amino-acid polypeptide reads, in one-letter code: MSLDAIKRKISSVQTTAKITNAMKLVATAKLKRQRDRLAAIKEYCHDYYDVIGLLLSVVNDIEFLKIPNAKNRTLYITINSTMGLAGSYNYNVNKLVSKIINEDDITFTIGKKGHDFMRLSNRLHQVNTYLNLNDNDLTFDMSLQIAREALELYSNGEVNKICIIYTKFINAITFEVNNIDVLPFDKTVLTKDNLAETIELAKDNIIFQPNKVELVKKILPTYIATVLYGSLIESKISENASRRNAMDAATKNAKALAEDYKLIYNTLRQGKITREITEIVAGSDD.

The protein belongs to the ATPase gamma chain family. F-type ATPases have 2 components, CF(1) - the catalytic core - and CF(0) - the membrane proton channel. CF(1) has five subunits: alpha(3), beta(3), gamma(1), delta(1), epsilon(1). CF(0) has three main subunits: a, b and c.

The protein localises to the cell membrane. Its function is as follows. Produces ATP from ADP in the presence of a proton gradient across the membrane. The gamma chain is believed to be important in regulating ATPase activity and the flow of protons through the CF(0) complex. This chain is ATP synthase gamma chain, found in Ureaplasma urealyticum serovar 10 (strain ATCC 33699 / Western).